Reading from the N-terminus, the 49-residue chain is Large ribosomal subunit protein bL33 (49 aa).

It belongs to the bacterial ribosomal protein bL33 family.

In Fervidobacterium nodosum (strain ATCC 35602 / DSM 5306 / Rt17-B1), this protein is Large ribosomal subunit protein bL33.